A 150-amino-acid polypeptide reads, in one-letter code: Large ribosomal subunit protein uL15 (150 aa).

The disordered stretch occupies residues 1–57; the sequence is MTIKLESLQSNKGSRRKKMRKGRGIAAGQGASCGFGMRGQKSRSGRPTRPGFEGGQM. Basic residues predominate over residues 13–23; sequence GSRRKKMRKGR. Residues 25 to 37 show a composition bias toward gly residues; it reads IAAGQGASCGFGM.

It belongs to the universal ribosomal protein uL15 family. In terms of assembly, part of the 50S ribosomal subunit.

Functionally, binds to the 23S rRNA. The chain is Large ribosomal subunit protein uL15 from Prochlorococcus marinus (strain NATL1A).